The chain runs to 1758 residues: RanBP2-like and GRIP domain-containing protein 3 (1758 aa).

Serine 21 is subject to Phosphoserine. A TPR 1 repeat occupies 60–93 (PRAHRFLGLLYELEENTEKAVECYRRSVELNPTQ). A coiled-coil region spans residues 176–229 (RSTKRLKDAVARCHEAERNIALRSSLEWNSCVVQTLKEYLESLQCLESDKSDWR). The TPR 2 repeat unit spans residues 584–617 (QKMGSGLNSFYDQREYIGRSVHYWKKVLPLLKII). The interval 761–805 (GPLYKNGSLRNADSEIKHSTPSPTKYSLSPSKSYKYSPKTPPRWA) is disordered. A compositionally biased stretch (low complexity) spans 779-798 (STPSPTKYSLSPSKSYKYSP). Positions 805–837 (AEDQNSLLKMIRQEVKAIKEEMQELKLNSSKSA) form a coiled coil. Residues 1037 to 1173 (HFEPVVQMPE…FEECQRLLLD (137 aa)) form the RanBD1 1 domain. Disordered stretches follow at residues 1216–1248 (VAEE…PTLE), 1307–1335 (AKLN…GQYF), and 1581–1622 (NNSE…KNLS). The segment covering 1236–1245 (IKPNAENTGP) has biased composition (polar residues). Positions 1318–1330 (TDEESDVTQEEER) are enriched in acidic residues. The region spanning 1334–1470 (YFEPVVPLPD…FDEAKTAQEK (137 aa)) is the RanBD1 2 domain. Over residues 1581 to 1594 (NNSETSSVAQSGSE) the composition is skewed to polar residues. Positions 1595–1618 (SKVEPKKCELSKNSDIEQSSDSKV) are enriched in basic and acidic residues. Residues 1703–1753 (QEVSAANVEHLKNVLLQFIFLKPGSERERLLPVINTMLQLSLEEKGKLAAV) enclose the GRIP domain.

This chain is RanBP2-like and GRIP domain-containing protein 3 (RGPD3), found in Homo sapiens (Human).